The primary structure comprises 101 residues: Urease subunit beta (101 aa).

Belongs to the urease beta subunit family. Heterotrimer of UreA (gamma), UreB (beta) and UreC (alpha) subunits. Three heterotrimers associate to form the active enzyme.

The protein resides in the cytoplasm. It catalyses the reaction urea + 2 H2O + H(+) = hydrogencarbonate + 2 NH4(+). It participates in nitrogen metabolism; urea degradation; CO(2) and NH(3) from urea (urease route): step 1/1. This Rhizobium meliloti (strain 1021) (Ensifer meliloti) protein is Urease subunit beta.